The primary structure comprises 151 residues: Probable cGMP 3',5'-cyclic phosphodiesterase subunit delta (151 aa).

The protein belongs to the PDE6D/unc-119 family. In terms of assembly, interacts with Pde6.

It is found in the nucleus. Its subcellular location is the cytoplasm. This Drosophila mojavensis (Fruit fly) protein is Probable cGMP 3',5'-cyclic phosphodiesterase subunit delta.